A 331-amino-acid chain; its full sequence is Putative heat stress transcription factor A-6a (331 aa).

A disordered region spans residues 135–160 (RRGAGTGSTTPRAVNCGGGGGEGEVE). Positions 156 to 238 (EGEVERLRRD…VERKKRRMLA (83 aa)) form a coiled coil. Positions 162 to 212 (LRRDKEALARELARLRRQQQEARAQLLDMERRVRGTERRQEQCTEFLARAL) are hydrophobic repeat HR-A/B. A Nuclear localization signal motif is present at residues 230–235 (ERKKRR). The Nuclear export signal signature appears at 246 to 253 (LTFEALAL). Residues 270-279 (DMIWYELLGE) carry the AHA1 motif. The AHA2 motif lies at 305–313 (AEPWEEMGE).

This sequence belongs to the HSF family. Class A subfamily. In terms of assembly, homotrimer. Exhibits temperature-dependent phosphorylation.

Its subcellular location is the cytoplasm. The protein localises to the nucleus. Transcriptional regulator that specifically binds DNA of heat shock promoter elements (HSE). This chain is Putative heat stress transcription factor A-6a (HSFA6A), found in Oryza sativa subsp. japonica (Rice).